The chain runs to 250 residues: Probable aquaporin TIP1-1 (250 aa).

Transmembrane regions (helical) follow at residues 25–44 (AEFISTLIFVFAGQGSGMAF) and 58–77 (LIAAAVAHAFALFVAVSVGA). Positions 85 to 87 (NPA) match the NPA 1 motif. The next 3 membrane-spanning stretches (helical) occupy residues 103–121 (GLLYWIAQLLGSTVACFLL), 144–163 (LVLEIVMTFGLVYTVYATAV), and 170–192 (LGTIAPIAIGFIVGANILVGGAF). The NPA 2 signature appears at 198-200 (NPA). A helical transmembrane segment spans residues 216–233 (WVYWVGPLIGGGLAGVIY).

The protein belongs to the MIP/aquaporin (TC 1.A.8) family. TIP (TC 1.A.8.10) subfamily. As to expression, expressed in roots and leaves.

The protein localises to the vacuole membrane. Its function is as follows. Aquaporins facilitate the transport of water and small neutral solutes across cell membranes. May be involved in transport from the vacuolar compartment to the cytoplasm. The sequence is that of Probable aquaporin TIP1-1 (TIP1-1) from Oryza sativa subsp. japonica (Rice).